We begin with the raw amino-acid sequence, 84 residues long: PAMP-induced secreted peptide 2 (84 aa).

Positions 1-24 (MMMNKNVLSSILFFMLIGSVLVES) are cleaved as a signal peptide. Positions 50–84 (KDSGPSPGEGHKVVDRKDTFRFVKHSGPSPSGPGH) are disordered. The segment covering 58-70 (EGHKVVDRKDTFR) has biased composition (basic and acidic residues). Residues Pro77 and Pro79 each carry the 4-hydroxyproline modification.

In terms of processing, contains 4-hydroxyproline; hydroxylated on Pro-77 and Pro-79.

The protein localises to the secreted. It is found in the extracellular space. The protein resides in the apoplast. Its function is as follows. Endogenous secreted peptide that acts as elicitor of immune response and positive regulator of defense response. Amplifies the immune response triggered by flg22, the active epitope of bacterial flagellin. Acts as a negative regulator of root growth. The protein is PAMP-induced secreted peptide 2 of Arabidopsis thaliana (Mouse-ear cress).